Consider the following 384-residue polypeptide: Cytochrome b (384 aa).

A run of 4 helical transmembrane segments spans residues 32–52, 76–98, 113–133, and 179–199; these read LGSL…FLAM, WLIR…IHIG, VWTV…LGYC, and FFTF…MHLM. The heme b site is built by His82 and His96. Heme b contacts are provided by His183 and His197. A ubiquinone is bound at residue His202. The next 4 helical transmembrane spans lie at 225 to 245, 289 to 309, 321 to 341, and 348 to 368; these read FIFK…LFVF, LGGV…PITD, LSKF…KLGE, and FILM…ILVP.

Belongs to the cytochrome b family. Fungal cytochrome b-c1 complex contains 10 subunits; 3 respiratory subunits, 2 core proteins and 5 low-molecular weight proteins. Cytochrome b-c1 complex is a homodimer. It depends on heme b as a cofactor.

It is found in the mitochondrion inner membrane. Functionally, component of the ubiquinol-cytochrome c reductase complex (complex III or cytochrome b-c1 complex) that is part of the mitochondrial respiratory chain. The b-c1 complex mediates electron transfer from ubiquinol to cytochrome c. Contributes to the generation of a proton gradient across the mitochondrial membrane that is then used for ATP synthesis. The chain is Cytochrome b (COB) from Eremothecium gossypii (strain ATCC 10895 / CBS 109.51 / FGSC 9923 / NRRL Y-1056) (Yeast).